The following is a 222-amino-acid chain: Interleukin-12 subunit alpha (222 aa).

An N-terminal signal peptide occupies residues 1 to 25 (MCPLRNLLLVATLVLLNHLDHLSLG). 3 disulfide bridges follow: C40/C113, C67/C199, and C88/C126. N-linked (GlcNAc...) asparagine glycans are attached at residues N42 and N96.

The protein belongs to the IL-6 superfamily. Heterodimer with IL12B; disulfide-linked. This heterodimer is known as interleukin IL-12. Heterodimer with EBI3/IL27B; not disulfide-linked. This heterodimer is known as interleukin IL-35. Interacts with NBR1; this interaction promotes IL-12 secretion.

The protein localises to the secreted. Functionally, heterodimerizes with IL12B to form the IL-12 cytokine or with EBI3/IL27B to form the IL-35 cytokine. IL-12 is primarily produced by professional antigen-presenting cells (APCs) such as B-cells and dendritic cells (DCs) as well as macrophages and granulocytes and regulates T-cell and natural killer-cell responses, induces the production of interferon-gamma (IFN-gamma), favors the differentiation of T-helper 1 (Th1) cells and is an important link between innate resistance and adaptive immunity. Mechanistically, exerts its biological effects through a receptor composed of IL12R1 and IL12R2 subunits. Binding to the receptor results in the rapid tyrosine phosphorylation of a number of cellular substrates including the JAK family kinases TYK2 and JAK2. In turn, recruited STAT4 gets phosphorylated and translocates to the nucleus where it regulates cytokine/growth factor responsive genes. As part of IL-35, plays essential roles in maintaining the immune homeostasis of the liver microenvironment and also functions as an immune-suppressive cytokine. Mediates biological events through unconventional receptors composed of IL12RB2 and gp130/IL6ST heterodimers or homodimers. Signaling requires the transcription factors STAT1 and STAT4, which form a unique heterodimer that binds to distinct DNA sites. The polypeptide is Interleukin-12 subunit alpha (IL12A) (Sus scrofa (Pig)).